The primary structure comprises 162 residues: MVILGIDPGTAICGYGLIEVQGNRLSALAYGAVRTPAHTSQASRLQTIFTDLEAIIATYRPTHVAVEELFFNRNVTTALTVGQARGVILLAAARAGLSVHEYKPSQVKQAVVGYGRAEKQQVQQMVRVLLALEEIPKPDDVADALAVAICCAHSLTWGVACR.

Active-site residues include D7, E67, and D140. Residues D7, E67, and D140 each coordinate Mg(2+).

This sequence belongs to the RuvC family. In terms of assembly, homodimer which binds Holliday junction (HJ) DNA. The HJ becomes 2-fold symmetrical on binding to RuvC with unstacked arms; it has a different conformation from HJ DNA in complex with RuvA. In the full resolvosome a probable DNA-RuvA(4)-RuvB(12)-RuvC(2) complex forms which resolves the HJ. It depends on Mg(2+) as a cofactor.

It localises to the cytoplasm. The enzyme catalyses Endonucleolytic cleavage at a junction such as a reciprocal single-stranded crossover between two homologous DNA duplexes (Holliday junction).. Functionally, the RuvA-RuvB-RuvC complex processes Holliday junction (HJ) DNA during genetic recombination and DNA repair. Endonuclease that resolves HJ intermediates. Cleaves cruciform DNA by making single-stranded nicks across the HJ at symmetrical positions within the homologous arms, yielding a 5'-phosphate and a 3'-hydroxyl group; requires a central core of homology in the junction. The consensus cleavage sequence is 5'-(A/T)TT(C/G)-3'. Cleavage occurs on the 3'-side of the TT dinucleotide at the point of strand exchange. HJ branch migration catalyzed by RuvA-RuvB allows RuvC to scan DNA until it finds its consensus sequence, where it cleaves and resolves the cruciform DNA. In Heliobacterium modesticaldum (strain ATCC 51547 / Ice1), this protein is Crossover junction endodeoxyribonuclease RuvC.